Consider the following 61-residue polypeptide: Large ribosomal subunit protein uL30 (61 aa).

This sequence belongs to the universal ribosomal protein uL30 family. Part of the 50S ribosomal subunit.

This Caulobacter vibrioides (strain ATCC 19089 / CIP 103742 / CB 15) (Caulobacter crescentus) protein is Large ribosomal subunit protein uL30.